A 326-amino-acid chain; its full sequence is N-acetyl-gamma-glutamyl-phosphate reductase (326 aa).

Residue Cys-155 is part of the active site.

This sequence belongs to the NAGSA dehydrogenase family. Type 1 subfamily.

The protein resides in the cytoplasm. The enzyme catalyses N-acetyl-L-glutamate 5-semialdehyde + phosphate + NADP(+) = N-acetyl-L-glutamyl 5-phosphate + NADPH + H(+). Its pathway is amino-acid biosynthesis; L-arginine biosynthesis; N(2)-acetyl-L-ornithine from L-glutamate: step 3/4. Functionally, catalyzes the NADPH-dependent reduction of N-acetyl-5-glutamyl phosphate to yield N-acetyl-L-glutamate 5-semialdehyde. The protein is N-acetyl-gamma-glutamyl-phosphate reductase of Shewanella woodyi (strain ATCC 51908 / MS32).